We begin with the raw amino-acid sequence, 463 residues long: Hydroxyacid-oxoacid transhydrogenase, mitochondrial (463 aa).

Belongs to the iron-containing alcohol dehydrogenase family. Hydroxyacid-oxoacid transhydrogenase subfamily.

It localises to the mitochondrion. The enzyme catalyses (S)-3-hydroxybutanoate + 2-oxoglutarate = (R)-2-hydroxyglutarate + acetoacetate. It catalyses the reaction 4-hydroxybutanoate + 2-oxoglutarate = (R)-2-hydroxyglutarate + succinate semialdehyde. Catalyzes the cofactor-independent reversible oxidation of gamma-hydroxybutyrate (GHB) to succinic semialdehyde (SSA) coupled to reduction of 2-ketoglutarate (2-KG) to D-2-hydroxyglutarate (D-2-HG). L-3-hydroxybutyrate (L-3-OHB) is also a substrate for HOT when using 2-KG as hydrogen acceptor, resulting in the formation of D-2-HG. This Xenopus laevis (African clawed frog) protein is Hydroxyacid-oxoacid transhydrogenase, mitochondrial (adhfe1).